The following is a 311-amino-acid chain: Pyrimidine-specific ribonucleoside hydrolase RihA (311 aa).

H240 is an active-site residue.

This sequence belongs to the IUNH family. RihA subfamily.

Hydrolyzes with equal efficiency cytidine or uridine to ribose and cytosine or uracil, respectively. The chain is Pyrimidine-specific ribonucleoside hydrolase RihA from Escherichia coli (strain ATCC 8739 / DSM 1576 / NBRC 3972 / NCIMB 8545 / WDCM 00012 / Crooks).